The following is a 993-amino-acid chain: Signal peptide, CUB and EGF-like domain-containing protein 3 (993 aa).

The signal sequence occupies residues 1 to 20 (MGSGRVPGLCLLLLLVHARA). The EGF-like 1; calcium-binding domain maps to 29 to 69 (DVDECVEGTDNCHIDAICQNTPRSYKCICKSGYTGDGKHCK). 26 disulfides stabilise this stretch: Cys-33–Cys-46, Cys-40–Cys-55, Cys-57–Cys-68, Cys-74–Cys-86, Cys-82–Cys-95, Cys-97–Cys-110, Cys-116–Cys-127, Cys-123–Cys-136, Cys-161–Cys-172, Cys-168–Cys-182, Cys-184–Cys-197, Cys-201–Cys-212, Cys-208–Cys-221, Cys-223–Cys-236, Cys-240–Cys-251, Cys-247–Cys-260, Cys-262–Cys-275, Cys-281–Cys-292, Cys-288–Cys-301, Cys-303–Cys-316, Cys-322–Cys-332, Cys-328–Cys-341, Cys-343–Cys-355, Cys-361–Cys-372, Cys-368–Cys-381, and Cys-383–Cys-397. Residues 70 to 111 (DVDECEREDNAGCVHDCVNIPGNYRCTCYDGFHLAHDGHNCL) form the EGF-like 2; calcium-binding domain. The region spanning 112-148 (DVDECAEGNGGCQQSCVNMMGSYECHCRDGFFLSDNQ) is the EGF-like 3; calcium-binding domain. EGF-like domains lie at 157-198 (EGMN…RDCK), 199-237 (LTCN…KTCI), and 238-276 (ETCA…KTCK). The 41-residue stretch at 277–317 (DIDECRLNNGGCDHICRNTVGSFECSCKKGYKLLINERSCQ) folds into the EGF-like 7; calcium-binding domain. In terms of domain architecture, EGF-like 8; calcium-binding spans 318–356 (DIDECSFDRTCDHMCVNTPGSFQCLCHRGYLLYGVTHCG). An EGF-like 9; calcium-binding domain is found at 357–398 (DVDECSINKGGCRFGCINTPGSYQCTCPAGQGRLHWNGKDCT). Residues Asn-417, Asn-464, Asn-685, Asn-756, and Asn-785 are each glycosylated (N-linked (GlcNAc...) asparagine). 2 cysteine pairs are disulfide-bonded: Cys-804–Cys-830 and Cys-857–Cys-878. Residues 804 to 916 (CGGELGEFTG…RGFQIPYVTY (113 aa)) form the CUB domain.

In terms of assembly, forms homooligomers. Forms heterooligomers with SCUBE1 and SCUBE2. Interacts with TGFBR2 through the CUB domain; this interaction does not affect TGFB1-binding to TGFBR2. Interacts with BMP2, BMP4 and BMP7; the interaction is mediated by the CUB domain. Interacts with BMPR1A, BMPR1B and BMPR2; the interaction with BMPR1A and BMPR1B is BMP2- and BMP4-dependent. N-glycosylated. In terms of processing, proteolytic cleavage produces a CUB-containing C-terminal fragment that retains the ability to bind to TGFBR2. This reaction is catalyzed in vitro by MMP2 and, to a lesser extent, by MMP9. Highly expressed in femur and humerus with little or no expression in non-bone tissues.

The protein localises to the secreted. It localises to the cell surface. Its function is as follows. Is a positive regulator of the BMP signaling pathway, required for proper chondrogenesis, osteogenesis and skeletal development. It acts as a coreceptor for BMP ligands, particularly BMP2 and BMP4, facilitating their interactions with BMP type I receptors. It is required for ligand-induced recruitment of BMP receptors to lipid rafts. Binds to TGFBR2 and activates TGFB signaling. In Mus musculus (Mouse), this protein is Signal peptide, CUB and EGF-like domain-containing protein 3.